The chain runs to 517 residues: GMP synthase [glutamine-hydrolyzing] (517 aa).

Positions 9 to 199 (RILILDFGSQ…VLGVCGCERL (191 aa)) constitute a Glutamine amidotransferase type-1 domain. C86 acts as the Nucleophile in catalysis. Catalysis depends on residues H173 and E175. Residues 200-392 (WTSESIIEDA…LGLPYEMLYR (193 aa)) form the GMPS ATP-PPase domain. 227–233 (SGGVDSS) contributes to the ATP binding site.

As to quaternary structure, homodimer.

It carries out the reaction XMP + L-glutamine + ATP + H2O = GMP + L-glutamate + AMP + diphosphate + 2 H(+). It participates in purine metabolism; GMP biosynthesis; GMP from XMP (L-Gln route): step 1/1. Its function is as follows. Catalyzes the synthesis of GMP from XMP. This Vibrio vulnificus (strain YJ016) protein is GMP synthase [glutamine-hydrolyzing].